We begin with the raw amino-acid sequence, 223 residues long: UPF0441 protein KPK_0672 (223 aa).

Positions 165-223 (SYGAAQPGRTMNVPKTAMAPKPATTTTVTRGGFGESVAKQSTMQRSAAGSTSSSRSMGG) are disordered. Composition is skewed to low complexity over residues 177-193 (VPKT…TTVT) and 209-223 (RSAA…SMGG).

Belongs to the UPF0441 family.

The polypeptide is UPF0441 protein KPK_0672 (Klebsiella pneumoniae (strain 342)).